A 235-amino-acid chain; its full sequence is Glial cell line-derived neurotrophic factor (235 aa).

The first 19 residues, 1 to 19 (MKLWDILATCLLLLSSVST), serve as a signal peptide directing secretion. A propeptide spanning residues 20–87 (RPLFHKLQPS…DFIEATLGRL (68 aa)) is cleaved from the precursor. Disordered stretches follow at residues 34 to 60 (VRSESPALDPIIDSQPETSNPKQASME) and 91 to 137 (SDVE…RVKG). A compositionally biased stretch (basic residues) spans 119–128 (GERKRSRGRA). Cystine bridges form between Cys-142/Cys-203, Cys-169/Cys-232, and Cys-173/Cys-234. N-linked (GlcNAc...) asparagine glycosylation is found at Asn-150 and Asn-186.

This sequence belongs to the TGF-beta family. GDNF subfamily. Homodimer; disulfide-linked. Interacts with GFRA1 coreceptor and RET: forms a 2:2:2 ternary complex composed of GDNF ligand, GFRA1 and RET receptor. As to expression, first expressed at 14 hours post-fertilization (hpf) in the ventral half of anterior somites and in intermediate mesoderm. Ventral somitic expression persists and extends more posteriorly over the next 12 hours. Expressed throughout the ventral trunk mesoderm and endoderm at 24 hpf. By 30 hpf, somitic expression ceases and by 36 hpf, expression becomes restricted to the endodermal cells forming the gut, with expression along the whole length of the developing gut tube at 72 hpf.

Its subcellular location is the secreted. Its function is as follows. Neurotrophic factor that enhances survival and morphological differentiation of dopaminergic neurons and increases their high-affinity dopamine uptake. Acts by binding to its coreceptor, GFRA1, leading to autophosphorylation and activation of the RET receptor. This chain is Glial cell line-derived neurotrophic factor, found in Danio rerio (Zebrafish).